A 609-amino-acid chain; its full sequence is Hemagglutinin/proteinase (609 aa).

The signal sequence occupies residues 1–24 (MKMIQRPLNWLVLAGAATGFPLYA). Residues 25–196 (AQMVTIDDAS…LDQWDGINHA (172 aa)) constitute a propeptide that is removed on maturation. Residue histidine 343 coordinates Zn(2+). The active site involves glutamate 344. Histidine 347 and glutamate 367 together coordinate Zn(2+). Catalysis depends on histidine 426, which acts as the Proton donor.

The protein belongs to the peptidase M4 family. Zn(2+) serves as cofactor.

The protein localises to the secreted. Functionally, may play a role in the pathogenesis of cholera. Hap nicks and activates the A subunit of cholera enterotoxin and related enterotoxins. The sequence is that of Hemagglutinin/proteinase (hap) from Vibrio cholerae serotype O1 (strain ATCC 39315 / El Tor Inaba N16961).